The primary structure comprises 676 residues: Protein TAPT1 homolog (676 aa).

The disordered stretch occupies residues 1–44 (MNATLNSAGGKRQLRFRGDVTGSRVEELHHQQQEEQKQKAPLAQ). A compositionally biased stretch (basic and acidic residues) spans 24–38 (RVEELHHQQQEEQKQ). 6 helical membrane-spanning segments follow: residues 128 to 148 (SFLY…WALV), 170 to 190 (EICD…MLLV), 249 to 269 (VLTH…LIMF), 346 to 366 (FCVM…IDWV), 414 to 434 (GFIP…AVSF), and 437 to 457 (LAAW…RICL). The segment at 625–676 (SGDGVTSAKAKKATQRLPKRTHKRSESEPGMPSMVEKGGAAGIAGGNQTTQL) is disordered. A compositionally biased stretch (basic residues) spans 633–647 (KAKKATQRLPKRTHK).

The protein belongs to the TAPT1 family.

The protein resides in the membrane. This is Protein TAPT1 homolog from Drosophila melanogaster (Fruit fly).